Consider the following 181-residue polypeptide: Probable integrase/recombinase YoeC (181 aa).

Residues 3–176 (IVQPIRSLEK…DEDTTRAAYK (174 aa)) enclose the Tyr recombinase domain. Active-site residues include R40, K64, H128, R131, and H154. Y163 acts as the O-(3'-phospho-DNA)-tyrosine intermediate in catalysis.

Belongs to the 'phage' integrase family.

This chain is Probable integrase/recombinase YoeC (yoeC), found in Bacillus subtilis (strain 168).